We begin with the raw amino-acid sequence, 318 residues long: 4-hydroxy-3-methylbut-2-enyl diphosphate reductase (318 aa).

C12 contacts [4Fe-4S] cluster. H41 and H74 together coordinate (2E)-4-hydroxy-3-methylbut-2-enyl diphosphate. Positions 41 and 74 each coordinate dimethylallyl diphosphate. Residues H41 and H74 each coordinate isopentenyl diphosphate. Position 96 (C96) interacts with [4Fe-4S] cluster. H124 is a (2E)-4-hydroxy-3-methylbut-2-enyl diphosphate binding site. H124 contributes to the dimethylallyl diphosphate binding site. Isopentenyl diphosphate is bound at residue H124. The Proton donor role is filled by E126. Position 167 (T167) interacts with (2E)-4-hydroxy-3-methylbut-2-enyl diphosphate. C197 serves as a coordination point for [4Fe-4S] cluster. Residues S225, S226, N227, and S269 each coordinate (2E)-4-hydroxy-3-methylbut-2-enyl diphosphate. Positions 225, 226, 227, and 269 each coordinate dimethylallyl diphosphate. Isopentenyl diphosphate-binding residues include S225, S226, N227, and S269.

This sequence belongs to the IspH family. [4Fe-4S] cluster serves as cofactor.

The catalysed reaction is isopentenyl diphosphate + 2 oxidized [2Fe-2S]-[ferredoxin] + H2O = (2E)-4-hydroxy-3-methylbut-2-enyl diphosphate + 2 reduced [2Fe-2S]-[ferredoxin] + 2 H(+). It carries out the reaction dimethylallyl diphosphate + 2 oxidized [2Fe-2S]-[ferredoxin] + H2O = (2E)-4-hydroxy-3-methylbut-2-enyl diphosphate + 2 reduced [2Fe-2S]-[ferredoxin] + 2 H(+). It functions in the pathway isoprenoid biosynthesis; dimethylallyl diphosphate biosynthesis; dimethylallyl diphosphate from (2E)-4-hydroxy-3-methylbutenyl diphosphate: step 1/1. It participates in isoprenoid biosynthesis; isopentenyl diphosphate biosynthesis via DXP pathway; isopentenyl diphosphate from 1-deoxy-D-xylulose 5-phosphate: step 6/6. Its function is as follows. Catalyzes the conversion of 1-hydroxy-2-methyl-2-(E)-butenyl 4-diphosphate (HMBPP) into a mixture of isopentenyl diphosphate (IPP) and dimethylallyl diphosphate (DMAPP). Acts in the terminal step of the DOXP/MEP pathway for isoprenoid precursor biosynthesis. This chain is 4-hydroxy-3-methylbut-2-enyl diphosphate reductase, found in Francisella tularensis subsp. mediasiatica (strain FSC147).